The chain runs to 274 residues: Thiamine kinase (274 aa).

This sequence belongs to the thiamine kinase family.

It catalyses the reaction thiamine + ATP = thiamine phosphate + ADP + H(+). It participates in cofactor biosynthesis; thiamine diphosphate biosynthesis; thiamine phosphate from thiamine: step 1/1. In terms of biological role, catalyzes the ATP-dependent phosphorylation of thiamine to thiamine phosphate. Is involved in thiamine salvage. In Shigella dysenteriae serotype 1 (strain Sd197), this protein is Thiamine kinase.